The following is a 206-amino-acid chain: Ribonuclease HII (206 aa).

The RNase H type-2 domain maps to 1-206; the sequence is MKVLGIDEAG…SWATVQKKKQ (206 aa). Positions 7, 8, and 105 each coordinate a divalent metal cation.

It belongs to the RNase HII family. It depends on Mn(2+) as a cofactor. Mg(2+) is required as a cofactor.

It localises to the cytoplasm. The catalysed reaction is Endonucleolytic cleavage to 5'-phosphomonoester.. Endonuclease that specifically degrades the RNA of RNA-DNA hybrids. In Methanothermobacter thermautotrophicus (strain ATCC 29096 / DSM 1053 / JCM 10044 / NBRC 100330 / Delta H) (Methanobacterium thermoautotrophicum), this protein is Ribonuclease HII (rnhB).